The sequence spans 206 residues: MSRPRLLPEPVGLKFVTQETPPDWDAEFGFSGPLELEIGSGAGGHALEYCRRHPEVRFVAFEWRKKYARDTQDRADKAGLRNLRVIESDARFIVPRIFAPDSLAAIHLQFPDPWWKRSHAKRAVIQPAFAELLYGKLAPGGLFDMRTDVQDRGVTMLAILESVGFKNPLGSGVFHPYDPEEVPSTRERRYLASGEPVYRARLLKPA.

The S-adenosyl-L-methionine site is built by Glu-37, Glu-62, Asp-89, and Asp-112. Asp-112 is an active-site residue. Substrate is bound by residues Lys-116 and Asp-148.

It belongs to the class I-like SAM-binding methyltransferase superfamily. TrmB family.

It carries out the reaction guanosine(46) in tRNA + S-adenosyl-L-methionine = N(7)-methylguanosine(46) in tRNA + S-adenosyl-L-homocysteine. It participates in tRNA modification; N(7)-methylguanine-tRNA biosynthesis. Functionally, catalyzes the formation of N(7)-methylguanine at position 46 (m7G46) in tRNA. This Myxococcus xanthus (strain DK1622) protein is tRNA (guanine-N(7)-)-methyltransferase.